The sequence spans 110 residues: UPF0251 protein PH0803 (110 aa).

This sequence belongs to the UPF0251 family.

The chain is UPF0251 protein PH0803 from Pyrococcus horikoshii (strain ATCC 700860 / DSM 12428 / JCM 9974 / NBRC 100139 / OT-3).